The chain runs to 40 residues: U2-ctenitoxin-Pr1a (40 aa).

Intrachain disulfides connect cysteine 2–cysteine 17, cysteine 9–cysteine 22, cysteine 16–cysteine 32, and cysteine 24–cysteine 30.

Expressed by the venom gland.

The protein resides in the secreted. In terms of biological role, neurotoxin. The chain is U2-ctenitoxin-Pr1a from Phoneutria reidyi (Brazilian Amazonian armed spider).